The primary structure comprises 264 residues: Thymidylate synthase (264 aa).

Arg21 is a binding site for dUMP. His51 contacts (6R)-5,10-methylene-5,6,7,8-tetrahydrofolate. Position 126–127 (126–127 (RR)) interacts with dUMP. The active-site Nucleophile is Cys146. DUMP is bound by residues 166 to 169 (RSCD), Asn177, and 207 to 209 (HLY). Asp169 contributes to the (6R)-5,10-methylene-5,6,7,8-tetrahydrofolate binding site. A (6R)-5,10-methylene-5,6,7,8-tetrahydrofolate-binding site is contributed by Ala263.

It belongs to the thymidylate synthase family. Bacterial-type ThyA subfamily. In terms of assembly, homodimer.

The protein resides in the cytoplasm. It carries out the reaction dUMP + (6R)-5,10-methylene-5,6,7,8-tetrahydrofolate = 7,8-dihydrofolate + dTMP. Its pathway is pyrimidine metabolism; dTTP biosynthesis. Functionally, catalyzes the reductive methylation of 2'-deoxyuridine-5'-monophosphate (dUMP) to 2'-deoxythymidine-5'-monophosphate (dTMP) while utilizing 5,10-methylenetetrahydrofolate (mTHF) as the methyl donor and reductant in the reaction, yielding dihydrofolate (DHF) as a by-product. This enzymatic reaction provides an intracellular de novo source of dTMP, an essential precursor for DNA biosynthesis. The protein is Thymidylate synthase of Shewanella baltica (strain OS155 / ATCC BAA-1091).